Reading from the N-terminus, the 767-residue chain is Syn-copalyl diphosphate synthase (767 aa).

The interval Gly-45–Asp-74 is disordered. The segment covering Glu-59–Asp-74 has biased composition (basic and acidic residues). Lys-233 serves as a coordination point for substrate. Mg(2+) contacts are provided by Asp-365 and Asp-367. The DXDD motif motif lies at Asp-365–Asp-368. Residue Lys-453 coordinates substrate.

It depends on Mg(2+) as a cofactor.

The catalysed reaction is (2E,6E,10E)-geranylgeranyl diphosphate = 9alpha-copalyl diphosphate. Functionally, catalyzes the conversion of geranylgeranyl diphosphate to the phytoalexin precursor syn-copalyl diphosphate. The protein is Syn-copalyl diphosphate synthase (CPS4) of Oryza sativa subsp. indica (Rice).